The following is a 673-amino-acid chain: MAVSEQTVARAASLRDELNLYNHHYYTLDAPLVSDAQYDSLLNELRAIEAEYPELRTPDSPTQRVGSAPLSKFPKVQHPVPMLSLGNAFNADDLAAWRRRAEQIIGTQPMSYTVEPKIDGLAVALTYINGVFSVGATRGNGEIGEDITANLRTIRDVPLRLQPIDGQALPERIEVRGEVYLPIESFNQLNERQAHAGEKVFANPRNAAAGSLRQLDSTITASRPLRFFAYAVGPFSGVELKSQAQTLDTLRTYGFSVNPDTRLFADFEAVIEYCHEWMSRRESLSYEVDGVVVKINDFAMQRELGVVGRDPRWAIAYKFPAREETTTLLNIVINVGRTGKLIPNAVLEPVSLGGTTVQHASLHNADYIISRDIRIGDRVVVKRAGDVIPYVIGPIVEARTGDERVWPAPTHCPTCGQPVEQIGDEVDIYCVNNTCPARLIRSIEHWVSRGAMDIVGMGERQASQFVEMGLIKSIPDIYRLTVDSFGGREGYGERRVANLLNAIEESKRRPLDRVITALGINGVGTVAAADLARYFRSLPALAQATIEQLTAIEGIGGSTAQSVVDFFNTPANQQLIAELLALGLKAEPSEVAELQSDRLAGKSFVITGTLPGISREAAQALIEAHGGKVGGSVSKKTDYLLAGEAAGSKLTKAQSLGVKVLSMDELHALLVDE.

Residues 35 to 39, 84 to 85, and Glu115 each bind NAD(+); these read DAQYD and SL. The active-site N6-AMP-lysine intermediate is the Lys117. Residues Arg138, Glu178, Lys294, and Lys318 each coordinate NAD(+). Cys412, Cys415, Cys430, and Cys435 together coordinate Zn(2+). The 80-residue stretch at 594–673 folds into the BRCT domain; that stretch reads LQSDRLAGKS…DELHALLVDE (80 aa).

Belongs to the NAD-dependent DNA ligase family. LigA subfamily. The cofactor is Mg(2+). Mn(2+) is required as a cofactor.

The catalysed reaction is NAD(+) + (deoxyribonucleotide)n-3'-hydroxyl + 5'-phospho-(deoxyribonucleotide)m = (deoxyribonucleotide)n+m + AMP + beta-nicotinamide D-nucleotide.. Its function is as follows. DNA ligase that catalyzes the formation of phosphodiester linkages between 5'-phosphoryl and 3'-hydroxyl groups in double-stranded DNA using NAD as a coenzyme and as the energy source for the reaction. It is essential for DNA replication and repair of damaged DNA. The protein is DNA ligase of Herpetosiphon aurantiacus (strain ATCC 23779 / DSM 785 / 114-95).